A 298-amino-acid chain; its full sequence is Zinc-alpha-2-glycoprotein (298 aa).

The N-terminal stretch at 1-20 (MVRMVPVLLSLLLLLGPAVP) is a signal peptide. Gln-21 carries the post-translational modification Pyrrolidone carboxylic acid. N-linked (GlcNAc...) (complex) asparagine glycosylation occurs at Asn-109. Asn-112 carries an N-linked (GlcNAc...) asparagine glycan. Cystine bridges form between Cys-123/Cys-186 and Cys-225/Cys-280. Residue Asn-128 is glycosylated (N-linked (GlcNAc...) (complex) asparagine). Positions 207-292 (PSVVVTSHQA…QHSSLAQPLV (86 aa)) constitute an Ig-like C1-type domain. Residue Asn-259 is glycosylated (N-linked (GlcNAc...) asparagine).

Belongs to the MHC class I family. As to quaternary structure, interacts with PIP. N-glycosylated. N-glycan at Asn-128: Hex5HexNAc4. In terms of tissue distribution, blood plasma, seminal plasma, urine, saliva, sweat, epithelial cells of various human glands, liver.

The protein resides in the secreted. Stimulates lipid degradation in adipocytes and causes the extensive fat losses associated with some advanced cancers. May bind polyunsaturated fatty acids. The protein is Zinc-alpha-2-glycoprotein (AZGP1) of Homo sapiens (Human).